Reading from the N-terminus, the 561-residue chain is DNA mismatch repair protein MutL (561 aa).

Belongs to the DNA mismatch repair MutL/HexB family.

Its function is as follows. This protein is involved in the repair of mismatches in DNA. It is required for dam-dependent methyl-directed DNA mismatch repair. May act as a 'molecular matchmaker', a protein that promotes the formation of a stable complex between two or more DNA-binding proteins in an ATP-dependent manner without itself being part of a final effector complex. This Rippkaea orientalis (strain PCC 8801 / RF-1) (Cyanothece sp. (strain PCC 8801)) protein is DNA mismatch repair protein MutL.